The sequence spans 665 residues: SH3 domain-containing kinase-binding protein 1 (665 aa).

SH3 domains are found at residues 1–58 and 98–157; these read MVEA…EIKK and RRRR…ELSG. A phosphoserine mark is found at Ser-156, Ser-159, Ser-183, and Ser-230. The interval 159 to 200 is disordered; that stretch reads SDELGISQDEQLSKSSLRETTGSESDGGDSSSTKSEGANGTV. Low complexity predominate over residues 177-195; that stretch reads ETTGSESDGGDSSSTKSEG. Thr-254 bears the Phosphothreonine mark. In terms of domain architecture, SH3 3 spans 267–328; the sequence is KSKDYCKVIF…PDNFVKLLPP (62 aa). Disordered stretches follow at residues 328 to 444 and 467 to 610; these read PDFE…LAGS and DSVV…AAVE. The span at 355-390 shows a compositional bias: basic and acidic residues; that stretch reads TERKHEIKKIPPERPEMLPNRTEEKERPEREPKLDL. Ser-436 bears the Phosphoserine mark. Residues 469-484 are compositionally biased toward polar residues; it reads VVSSTEKLSHPTTSRP. Residues 491–510 show a composition bias toward low complexity; sequence PPSQSLTSSSLSSPDIFDSP. 3 positions are modified to phosphoserine: Ser-509, Ser-511, and Ser-521. A compositionally biased stretch (basic and acidic residues) spans 517 to 531; the sequence is EEHISLAHRGVDASK. The span at 535 to 546 shows a compositional bias: polar residues; it reads KTVTISQVSDNK. Positions 564-582 are enriched in low complexity; sequence APLSSAAPSPLSSSLGTAG. Phosphoserine is present on Ser-587. Residues 602–664 are a coiled coil; that stretch reads AASSQAAVEE…VNDIKKALQS (63 aa).

As to quaternary structure, can self-associate and form homotetramers. Interacts with CD2, F-actin capping protein, PIK3R3, GRB2, EGFR, MET, BLNK, MAP3K4, PDCD6IP, SPRY2, ARHGAP17, ARHGAP27, MAGI2, CRK, BCAR1, SOS1, ASAP1, ARAP3, HIP1R, SYNJ2, INPP5D and STAP1. Interacts with E3 ubiquitin-protein ligases CBL and CBLB, but does not interact with CBLC. Two molecules of SH3KBP1 seem to bind through their respective SH3 1 domain to one molecule of CBLB. The interaction with CBL or CBLB and EGFR is increased upon EGF stimulation. The interaction with CBL is attenuated by PDCD6IP. Interacts (via SH3 domains) with ARAP1. The interaction is independent of EGF and does not affect ARAP1 GTPase-activating activity but is involved in regulating ubiquitination and endocytic trafficking of EGFR. ARAP1 competes with CBL for binding to SH3KBP1 and prevents interaction of CBL with SH3KBP1; this is likely to regulate SH3KBP1-mediated internalization of EGFR. Interacts through its proline-rich region with the SH3 domain of endophilins SH3GL1, SH3GL2 and SH3GL3. The SH3KBP1-endophilin complex seems to associate with a complex containing the phosphorylated receptor (EGFR or MET) and phosphorylated CBL. Probably associates with ASAP1 and phosphorylated EGFR. Probably part of a complex consisting of at least SH3KBP1, ASAP1 and ARAP3. Interacts with focal adhesion kinases PTK2/FAK1 and PTK2B/PYK2, probably as a dimer. Interacts with DAB2 and probably associates with chathrin through its interaction with DAB2. Part of a complex consisting of SH3KBP1, DAB2, and clathrin heavy chain. DAB2 and clathrin dissociate from SH3KBP1 following growth factor treatment, enabling interaction with CBL. Interacts with DDN and probably associates with MAGI2 through its interaction with DDN. Interacts with the SH3 domains of SRC tyrosine-protein kinases SRC, LCK, LYN, FGR, FYN and HCK. Interacts with TRADD, BIRC2, TRAF1, TRAF2 and TNFR1, and the association with a TNFR1-associated complex upon stimulation with TNF-alpha seems to be mediated by SRC. Interacts (via SH3 domains) with SHKBP1 (via PXXXPR motifs). Interaction with CBL is abolished in the presence of SHKBP1. Interacts (via SH3 domains) with ZFP36 (via extreme C-terminal region). Interacts with MAP3K4; this interaction enhances the association with ZFP36. In terms of assembly, (Microbial infection) Interacts (via SH3 domains) with Chikungunya virus non-structural protein 3 (via C-terminus); this interaction plays a role in initiation of viral replication. Post-translationally, monoubiquitinated by CBL and CBLB after EGF stimulation; probably on its C-terminus. Ubiquitously expressed. Also expressed in some cancer cell lines.

The protein localises to the cytoplasm. It is found in the cytoskeleton. Its subcellular location is the cytoplasmic vesicle membrane. The protein resides in the synapse. It localises to the synaptosome. The protein localises to the cell junction. It is found in the focal adhesion. Its function is as follows. Adapter protein involved in regulating diverse signal transduction pathways. Involved in the regulation of endocytosis and lysosomal degradation of ligand-induced receptor tyrosine kinases, including EGFR and MET/hepatocyte growth factor receptor, through an association with CBL and endophilins. The association with CBL, and thus the receptor internalization, may be inhibited by an interaction with PDCD6IP and/or SPRY2. Involved in regulation of ligand-dependent endocytosis of the IgE receptor. Attenuates phosphatidylinositol 3-kinase activity by interaction with its regulatory subunit. May be involved in regulation of cell adhesion; promotes the interaction between TTK2B and PDCD6IP. May be involved in the regulation of cellular stress response via the MAPK pathways through its interaction with MAP3K4. Is involved in modulation of tumor necrosis factor mediated apoptosis. Plays a role in the regulation of cell morphology and cytoskeletal organization. Required in the control of cell shape and migration. Has an essential role in the stimulation of B cell activation. The chain is SH3 domain-containing kinase-binding protein 1 (SH3KBP1) from Homo sapiens (Human).